The sequence spans 492 residues: Adenosylhomocysteinase (492 aa).

The substrate site is built by T68, D153, and E215. 216–218 (TTT) lines the NAD(+) pocket. Positions 245 and 249 each coordinate substrate. NAD(+) is bound by residues N250, 279 to 284 (GYGDVG), E302, N337, 358 to 360 (IGH), and N406.

Belongs to the adenosylhomocysteinase family. It depends on NAD(+) as a cofactor.

It localises to the cytoplasm. It carries out the reaction S-adenosyl-L-homocysteine + H2O = L-homocysteine + adenosine. Its pathway is amino-acid biosynthesis; L-homocysteine biosynthesis; L-homocysteine from S-adenosyl-L-homocysteine: step 1/1. May play a key role in the regulation of the intracellular concentration of adenosylhomocysteine. This chain is Adenosylhomocysteinase, found in Mycobacterium leprae (strain Br4923).